The primary structure comprises 227 residues: Cytochrome c oxidase subunit 2 (227 aa).

Topologically, residues 1–14 (MAYPFQLGLQDATS) are mitochondrial intermembrane. The helical transmembrane segment at 15–45 (PIMEELLHFHDHTLMIVFLISSLVLYIISLM) threads the bilayer. Over 46–59 (LTTKLTHTSTMDAQ) the chain is Mitochondrial matrix. The chain crosses the membrane as a helical span at residues 60-87 (EVETVWTILPAIILILIALPSLRILYMM). The Mitochondrial intermembrane segment spans residues 88 to 227 (DEINNPSLTV…YFETWSAVMV (140 aa)). 6 residues coordinate Cu cation: H161, C196, E198, C200, H204, and M207. Residue E198 participates in Mg(2+) binding. Phosphotyrosine is present on Y218.

It belongs to the cytochrome c oxidase subunit 2 family. In terms of assembly, component of the cytochrome c oxidase (complex IV, CIV), a multisubunit enzyme composed of 14 subunits. The complex is composed of a catalytic core of 3 subunits MT-CO1, MT-CO2 and MT-CO3, encoded in the mitochondrial DNA, and 11 supernumerary subunits COX4I, COX5A, COX5B, COX6A, COX6B, COX6C, COX7A, COX7B, COX7C, COX8 and NDUFA4, which are encoded in the nuclear genome. The complex exists as a monomer or a dimer and forms supercomplexes (SCs) in the inner mitochondrial membrane with NADH-ubiquinone oxidoreductase (complex I, CI) and ubiquinol-cytochrome c oxidoreductase (cytochrome b-c1 complex, complex III, CIII), resulting in different assemblies (supercomplex SCI(1)III(2)IV(1) and megacomplex MCI(2)III(2)IV(2)). Found in a complex with TMEM177, COA6, COX18, COX20, SCO1 and SCO2. Interacts with TMEM177 in a COX20-dependent manner. Interacts with COX20. Interacts with COX16. Requires Cu cation as cofactor.

Its subcellular location is the mitochondrion inner membrane. The catalysed reaction is 4 Fe(II)-[cytochrome c] + O2 + 8 H(+)(in) = 4 Fe(III)-[cytochrome c] + 2 H2O + 4 H(+)(out). In terms of biological role, component of the cytochrome c oxidase, the last enzyme in the mitochondrial electron transport chain which drives oxidative phosphorylation. The respiratory chain contains 3 multisubunit complexes succinate dehydrogenase (complex II, CII), ubiquinol-cytochrome c oxidoreductase (cytochrome b-c1 complex, complex III, CIII) and cytochrome c oxidase (complex IV, CIV), that cooperate to transfer electrons derived from NADH and succinate to molecular oxygen, creating an electrochemical gradient over the inner membrane that drives transmembrane transport and the ATP synthase. Cytochrome c oxidase is the component of the respiratory chain that catalyzes the reduction of oxygen to water. Electrons originating from reduced cytochrome c in the intermembrane space (IMS) are transferred via the dinuclear copper A center (CU(A)) of subunit 2 and heme A of subunit 1 to the active site in subunit 1, a binuclear center (BNC) formed by heme A3 and copper B (CU(B)). The BNC reduces molecular oxygen to 2 water molecules using 4 electrons from cytochrome c in the IMS and 4 protons from the mitochondrial matrix. The sequence is that of Cytochrome c oxidase subunit 2 (MT-CO2) from Lycalopex culpaeus (Culpeo fox).